A 1720-amino-acid chain; its full sequence is 182 kDa tankyrase-1-binding protein (1720 aa).

The interval 1 to 137 is disordered; that stretch reads MKGSTLREGT…PPLTPPARCA (137 aa). At S14 the chain carries Phosphoserine. Residues 117–127 are compositionally biased toward basic and acidic residues; sequence SGKEDAGKEDL. At T131 the chain carries Phosphothreonine. Residues S178 and S220 each carry the phosphoserine modification. Disordered regions lie at residues 185–472 and 485–595; these read SRLT…ESNW and RPSG…EDQE. Positions 209–1563 are acidic; the sequence is EEDSKSPAKG…TEILDSAMYR (1355 aa). A compositionally biased stretch (basic and acidic residues) spans 232 to 243; the sequence is QEEHSKTPEERN. Residue T238 is modified to Phosphothreonine. Positions 266-287 are enriched in polar residues; the sequence is VSKTWVTSSADPVSEHGGSTSA. A phosphoserine mark is found at S286 and S300. Positions 296 to 316 are enriched in low complexity; sequence PASESPRLSSRPSSPCHSQLS. The span at 317-327 shows a compositional bias: polar residues; that stretch reads ETQSPAASEAS. 2 positions are modified to phosphoserine: S429 and S437. Positions 449-459 are enriched in polar residues; that stretch reads TLPQGQGSQSA. 2 positions are modified to phosphoserine: S496 and S500. The segment covering 502 to 518 has biased composition (low complexity); that stretch reads ITEASEAAEAAEADSWA. A phosphothreonine mark is found at T503 and T533. S539, S568, S602, S673, S692, and S713 each carry phosphoserine. Disordered regions lie at residues 659–720, 734–924, and 955–1081; these read TTLP…CSEG, GVAT…EFEK, and SGGG…GWAG. The segment covering 742–758 has biased composition (low complexity); the sequence is SSFGSSSWSQDTSQNYS. Phosphoserine is present on residues S763, S796, S807, S845, S866, S871, S876, S887, S912, S976, S980, S1006, S1017, and S1022. Residues 840-866 show a composition bias toward basic and acidic residues; the sequence is FGKRESQDPHSIHDKELQDQEFGKRDS. A compositionally biased stretch (basic and acidic residues) spans 991–1014; it reads FEKKTPVGEDRFCEASRDVGHLEE. Residues 1027–1039 show a composition bias toward basic and acidic residues; sequence HSRDGAARPKDEG. Phosphoserine occurs at positions 1047, 1063, 1084, 1096, 1126, 1131, 1171, 1212, 1241, and 1246. The disordered stretch occupies residues 1128–1153; that stretch reads AGLSPSRKSGGGHFVPPGETKAGAVD. Residues 1198-1255 are disordered; that stretch reads LARRLGTGESEEPRSLGVGEKDWTSSVEARNRDLPGQAEVGRHSQARESGVGEPDWSG. The segment covering 1208–1230 has biased composition (basic and acidic residues); that stretch reads EEPRSLGVGEKDWTSSVEARNRD. T1275 carries the post-translational modification Phosphothreonine. Phosphoserine occurs at positions 1290, 1321, 1324, 1373, and 1375. Residues 1358 to 1546 are disordered; sequence GRVGPDLELD…RGLLPSCPSE (189 aa). A compositionally biased stretch (polar residues) spans 1402–1411; the sequence is EDSSSPSFET. A phosphoserine mark is found at S1425, S1429, S1437, S1440, S1442, S1463, and S1466. Residues 1428 to 1457 show a composition bias toward polar residues; it reads ASPSSCLTRSPPSGSQSLLEGIMTASSSKG. Residues 1440-1532 form a tankyrase-binding region; that stretch reads SGSQSLLEGI…QNEQASAPPP (93 aa). Low complexity predominate over residues 1477–1489; it reads LAAGAGQGEPQEP. S1496 is subject to Phosphoserine. The segment covering 1515–1527 has biased composition (polar residues); sequence WSLTGAARQNEQA. S1549 is modified (phosphoserine). Residue T1554 is modified to Phosphothreonine. The interval 1567–1720 is disordered; it reads NLGRKRGHRA…QALKLKKKKI (154 aa). Residues 1568 to 1577 show a composition bias toward basic residues; the sequence is LGRKRGHRAP. Residues 1593–1606 show a composition bias toward basic and acidic residues; sequence SDTRLFQDSTEPRA. S1611, S1612, and S1622 each carry phosphoserine. Residues 1620–1626 carry the Nuclear localization signal motif; that stretch reads PQSRRTR. K1635 carries the post-translational modification N6-methyllysine. Residues S1643 and S1657 each carry the phosphoserine modification. Residues 1656 to 1670 show a composition bias toward basic and acidic residues; that stretch reads RSAEEGEVTESKSSQ. The span at 1671-1690 shows a compositional bias: low complexity; that stretch reads KESSVQRSKSCKVPGLGKPL. The residue at position 1706 (S1706) is a Phosphoserine. Residues 1714–1719 carry the Nuclear localization signal motif; sequence KLKKKK.

In terms of assembly, binds to the ANK repeat domain of TNKS1 and TNKS2. Post-translationally, ADP-ribosylated by TNKS1.

Its subcellular location is the nucleus. It localises to the cytoplasm. The protein resides in the cytoskeleton. It is found in the chromosome. The protein is 182 kDa tankyrase-1-binding protein (Tnks1bp1) of Mus musculus (Mouse).